Reading from the N-terminus, the 598-residue chain is Elongation factor 4 (598 aa).

The tr-type G domain maps to asparagine 2 to glutamine 184. GTP-binding positions include aspartate 14–threonine 19 and asparagine 131–aspartate 134.

Belongs to the TRAFAC class translation factor GTPase superfamily. Classic translation factor GTPase family. LepA subfamily.

The protein localises to the cell membrane. It carries out the reaction GTP + H2O = GDP + phosphate + H(+). Functionally, required for accurate and efficient protein synthesis under certain stress conditions. May act as a fidelity factor of the translation reaction, by catalyzing a one-codon backward translocation of tRNAs on improperly translocated ribosomes. Back-translocation proceeds from a post-translocation (POST) complex to a pre-translocation (PRE) complex, thus giving elongation factor G a second chance to translocate the tRNAs correctly. Binds to ribosomes in a GTP-dependent manner. The polypeptide is Elongation factor 4 (Wolbachia sp. subsp. Drosophila simulans (strain wRi)).